Consider the following 323-residue polypeptide: uncharacterized protein (323 aa).

2 disordered regions span residues 185–214 (AELM…GSSW) and 271–294 (GNII…YEKL).

It belongs to the IGBP1/TAP42 family.

This is an uncharacterized protein from Schizosaccharomyces pombe (strain 972 / ATCC 24843) (Fission yeast).